The sequence spans 649 residues: Leucine-rich repeat transmembrane protein FLRT3 (649 aa).

Residues 1-28 (MISPAWSLFLIGTKIGLFFQVAPLSVMA) form the signal peptide. The LRRNT domain occupies 29-58 (KSCPSVCRCDAGFIYCNDRSLTSIPVGIPE). The Extracellular portion of the chain corresponds to 29-528 (KSCPSVCRCD…KEPYKNPNLP (500 aa)). Disulfide bonds link Cys-31/Cys-37 and Cys-35/Cys-44. The interaction with ADGRL3 stretch occupies residues 38–67 (DAGFIYCNDRSLTSIPVGIPEDATTLYLQN). 10 LRR repeats span residues 59 to 80 (DATT…SDLK), 84 to 104 (KVQR…NLPK), 105 to 126 (YVKE…SLSK), 129 to 150 (YLEE…EGAF), 155 to 176 (YLRL…LPRT), 177 to 197 (IEEL…SLHG), 200 to 220 (SLKR…GDKV), 226 to 247 (NLTE…LPGT), 248 to 269 (SLRK…AFSY), and 272 to 293 (QLYR…IFDD). N-linked (GlcNAc...) asparagine glycosylation occurs at Asn-226. Asn-282 and Asn-296 each carry an N-linked (GlcNAc...) asparagine glycan. An LRRCT domain is found at 305–357 (NPWYCGCKMKWVRDWLQSLPVKVNVRGLMCQAPEKVRGMAIKDLSAELFDCKD). The cysteines at positions 309 and 334 are disulfide-linked. Residues 378–405 (QGQWPAPVTKQPDIKNPKLTKDQRTTGS) form a disordered region. The span at 389–401 (PDIKNPKLTKDQR) shows a compositional bias: basic and acidic residues. Positions 405–504 (SPSRKTILIT…VCIETQTAPL (100 aa)) constitute a Fibronectin type-III domain. The chain crosses the membrane as a helical span at residues 529 to 549 (LAAIIGGAVALVSIALLALVC). The Cytoplasmic portion of the chain corresponds to 550 to 649 (WYVHRNGSLF…GIPDLDHSHS (100 aa)). Residues 629 to 649 (ESSSNRSYRDSGIPDLDHSHS) are disordered.

As to quaternary structure, monomer and homodimer. Self-associates (via leucine-rich repeats), giving rise to homooligomers. Interacts with FGFR1. Interacts (via extracellular domain) with ADGRL1/LPHN1 and ADGRL3 (via olfactomedin-like domain). Interacts (via extracellular domain) with LPHN2 (via olfactomedin-like domain). Interacts (via extracellular domain) with UNC5B (via Ig domain). May also interact (via extracellular domain) with UNC5A and UNC5C. Interacts (via extracellular domain) with UNC5D (via extracellular domain). Identified in complexes composed of FLRT3, ADGRL3 and UNC5B, respectively FLRT3, ADGRL3 and UNC5D. Interacts (via cytoplasmic domain) with ROBO1. Post-translationally, N-glycosylated. In terms of processing, proteolytic cleavage in the juxtamembrane region gives rise to a soluble ectodomain. Cleavage is probably effected by a metalloprotease. In terms of tissue distribution, detected in brain (at protein level). Detected in brain neurons, especially in basal ganglia, hippocampus dentate gyrus and CA3 region, cerebellum and in olfactory bulb.

The protein localises to the cell membrane. The protein resides in the presynaptic cell membrane. Its subcellular location is the synapse. It localises to the synaptosome. It is found in the postsynaptic density. The protein localises to the cell projection. The protein resides in the dendrite. Its subcellular location is the axon. It localises to the growth cone membrane. It is found in the cytoplasmic vesicle. The protein localises to the endoplasmic reticulum membrane. The protein resides in the cell junction. Its subcellular location is the focal adhesion. It localises to the secreted. Its function is as follows. Functions in cell-cell adhesion, cell migration and axon guidance, exerting an attractive or repulsive role depending on its interaction partners. Plays a role in the spatial organization of brain neurons. Plays a role in vascular development in the retina. Plays a role in cell-cell adhesion via its interaction with ADGRL3 and probably also other latrophilins that are expressed at the surface of adjacent cells. Interaction with the intracellular domain of ROBO1 mediates axon attraction towards cells expressing NTN1. Mediates axon growth cone collapse and plays a repulsive role in neuron guidance via its interaction with UNC5B, and possibly also other UNC-5 family members. Promotes neurite outgrowth (in vitro). Mediates cell-cell contacts that promote an increase both in neurite number and in neurite length. Plays a role in the regulation of the density of glutamaergic synapses. Plays a role in fibroblast growth factor-mediated signaling cascades. Required for normal morphogenesis during embryonic development, but not for normal embryonic patterning. Required for normal ventral closure, headfold fusion and definitive endoderm migration during embryonic development. Required for the formation of a normal basement membrane and the maintenance of a normal anterior visceral endoderm during embryonic development. The sequence is that of Leucine-rich repeat transmembrane protein FLRT3 (Flrt3) from Rattus norvegicus (Rat).